A 242-amino-acid chain; its full sequence is ATP-dependent dethiobiotin synthetase BioD (242 aa).

12–17 contributes to the ATP binding site; it reads EVGKTV. Residue Thr-16 coordinates Mg(2+). The active site involves Lys-37. Ser-41 is a substrate binding site. ATP is bound by residues Asp-51 and 112–115; that span reads EGAG. Mg(2+)-binding residues include Asp-51 and Glu-112.

This sequence belongs to the dethiobiotin synthetase family. Homodimer. Mg(2+) serves as cofactor.

It localises to the cytoplasm. The enzyme catalyses (7R,8S)-7,8-diammoniononanoate + CO2 + ATP = (4R,5S)-dethiobiotin + ADP + phosphate + 3 H(+). Its pathway is cofactor biosynthesis; biotin biosynthesis; biotin from 7,8-diaminononanoate: step 1/2. Functionally, catalyzes a mechanistically unusual reaction, the ATP-dependent insertion of CO2 between the N7 and N8 nitrogen atoms of 7,8-diaminopelargonic acid (DAPA, also called 7,8-diammoniononanoate) to form a ureido ring. The sequence is that of ATP-dependent dethiobiotin synthetase BioD from Bacillus thuringiensis subsp. konkukian (strain 97-27).